Consider the following 89-residue polypeptide: Luqin-like RYamide peptides lury-1 (89 aa).

The signal sequence occupies residues 1–19 (MLTRVPVLILAVIVMLALC). A propeptide spanning residues 20-26 (QEPEKPE) is cleaved from the precursor. A tyrosine amide mark is found at tyrosine 35 and tyrosine 43. Positions 47-89 (SGNLMESSQNSLTEESSDVVCQLIDGKYICLPVDAVRFRPFFL) are excised as a propeptide.

As to expression, expressed in the M1 and M2 pharyngeal neurons from where the LURY-1-1 and LURY-1-2 peptides are secreted.

Its subcellular location is the secreted. In terms of biological role, acts as a ligand for the npr-22 receptor and controls food-related processes including feeding, lifespan, egg-laying and roaming behavior. Secreted in the presence of food, leading to reduced feeding and roaming behavior and increased egg laying and lifespan. Activity may be latent under normal conditions but induced under conditions that cause hyperactivation of the pharynx such as abrupt refeeding after starvation. The polypeptide is Luqin-like RYamide peptides lury-1 (Caenorhabditis elegans).